Consider the following 582-residue polypeptide: Urocanate reductase (582 aa).

A signal peptide spans 1–20 (MHYKKSIIGIAVTATAIIAG). A lipid anchor (N-palmitoyl cysteine) is attached at C21. C21 is lipidated: S-diacylglycerol cysteine. Position 93 is an FMN phosphoryl threonine (T93). Residues A143, E162, N170, S171, G175, A176, A285, and D352 each coordinate FAD. The active-site Proton donor is the R411. Residues H521, E550, and A565 each coordinate FAD.

It belongs to the FAD-dependent oxidoreductase 2 family. FRD/SDH subfamily. FAD serves as cofactor. The cofactor is FMN.

The protein resides in the cell membrane. It catalyses the reaction dihydrourocanate + A = urocanate + AH2. Functionally, catalyzes the two-electron reduction of urocanate to dihydrourocanate (also named imidazole propionate or deamino-histidine). The physiological electron donor is unknown; it might be the membrane-bound tetraheme cytochrome c (CymA). Enables anaerobic growth with urocanate as a sole terminal electron acceptor, and thus can provide the cells with a niche where no other bacteria can compete and survive. Is unable to reduce cinnamate and other unsaturated organic acids such as acrylic, crotonic, fumaric and orotic acids. Has no fumarate reductase or succinate dehydrogenase activity. The chain is Urocanate reductase (urdA) from Shewanella oneidensis (strain ATCC 700550 / JCM 31522 / CIP 106686 / LMG 19005 / NCIMB 14063 / MR-1).